Reading from the N-terminus, the 256-residue chain is Sorbitol dehydrogenase (256 aa).

NAD(+) is bound by residues 15–17, Asp-36, 59–60, Asn-86, Tyr-152, Lys-156, and 182–187; these read RGI, DV, and PGVVDG. Catalysis depends on Tyr-152, which acts as the Proton acceptor.

This sequence belongs to the short-chain dehydrogenases/reductases (SDR) family. Homodimer. May function as a tetramer in vivo.

The enzyme catalyses keto-D-fructose + NADH + H(+) = D-sorbitol + NAD(+). It catalyses the reaction galactitol + NAD(+) = keto-D-tagatose + NADH + H(+). The catalysed reaction is L-iditol + NAD(+) = keto-L-sorbose + NADH + H(+). With respect to regulation, inhibited by DTT, N-bromosuccinimide and iodoacetic acid. Its function is as follows. Catalyzes the oxidation of D-sorbitol (D-glucitol) to D-fructose. Can also catalyze the oxidation of galactitol to D-tagatose and the oxidation of L-iditol, with lower efficiency. The polypeptide is Sorbitol dehydrogenase (polS) (Cereibacter sphaeroides (Rhodobacter sphaeroides)).